A 496-amino-acid polypeptide reads, in one-letter code: Sporulation-killing factor biosynthesis protein SkfC (496 aa).

The next 7 membrane-spanning stretches (helical) occupy residues 1-21 (MNSL…LLFI), 224-244 (VSGM…LVFM), 248-268 (TSII…SLTL), 291-311 (LLGI…VFIC), 331-351 (IVQI…TSLL), 399-419 (LLMI…IIVS), and 443-463 (FIFG…CVLV).

The protein localises to the membrane. Its function is as follows. Required for production of the bacteriocin SkfA. The chain is Sporulation-killing factor biosynthesis protein SkfC from Bacillus subtilis (strain 168).